The sequence spans 386 residues: Putative F-box/kelch-repeat protein At3g17280 (386 aa).

One can recognise an F-box domain in the interval 1–48; sequence MTTISDLPYDLLPEILSRLPTKSIPKLKTTCKKWYALFKDPKFVEKKL. Kelch repeat units follow at residues 155–203 and 340–386; these read SYKI…LKES and RIYI…IVEV.

This chain is Putative F-box/kelch-repeat protein At3g17280, found in Arabidopsis thaliana (Mouse-ear cress).